The following is a 502-amino-acid chain: Glycerol kinase (502 aa).

Thr16 contacts ADP. The ATP site is built by Thr16, Thr17, and Ser18. Thr16 is a sn-glycerol 3-phosphate binding site. An ADP-binding site is contributed by Arg20. Arg86, Glu87, Tyr138, and Asp247 together coordinate sn-glycerol 3-phosphate. Positions 86, 87, 138, 247, and 248 each coordinate glycerol. Thr269 and Gly312 together coordinate ADP. 4 residues coordinate ATP: Thr269, Gly312, Gln316, and Gly413. The ADP site is built by Gly413 and Asn417.

The protein belongs to the FGGY kinase family.

It catalyses the reaction glycerol + ATP = sn-glycerol 3-phosphate + ADP + H(+). Its pathway is polyol metabolism; glycerol degradation via glycerol kinase pathway; sn-glycerol 3-phosphate from glycerol: step 1/1. Its activity is regulated as follows. Inhibited by fructose 1,6-bisphosphate (FBP). Key enzyme in the regulation of glycerol uptake and metabolism. Catalyzes the phosphorylation of glycerol to yield sn-glycerol 3-phosphate. This Dechloromonas aromatica (strain RCB) protein is Glycerol kinase.